The following is a 474-amino-acid chain: Tumor necrosis factor receptor superfamily member 1B (474 aa).

A signal peptide spans 1 to 22; the sequence is MAPAALWVALVFELQLWATGHT. The Extracellular segment spans residues 23 to 258; sequence VPAQVVLTPY…PIIEQSTKGG (236 aa). Thr-30 carries an O-linked (GalNAc...) threonine glycan. TNFR-Cys repeat units follow at residues 39–77, 78–119, 120–164, and 165–203; these read ECQI…TVCA, DCEA…NRVC, ACEA…VLCK, and ACAP…AVCA. Cystine bridges form between Cys-40–Cys-54, Cys-55–Cys-68, Cys-58–Cys-76, Cys-79–Cys-94, Cys-97–Cys-111, Cys-101–Cys-119, Cys-121–Cys-127, Cys-136–Cys-145, Cys-139–Cys-163, and Cys-166–Cys-181. The N-linked (GlcNAc...) asparagine glycan is linked to Asn-69. Asn-195 is a glycosylation site (N-linked (GlcNAc...) asparagine). O-linked (GalNAc...) threonine glycans are attached at residues Thr-208 and Thr-224. A disordered region spans residues 220–243; it reads QPEPTRSQPLDQEPGPSQTPSILT. Residues 259 to 288 traverse the membrane as a helical segment; it reads ISLPIGLIVGVTSLGLLMLGLVNCIILVQR. At 289–474 the chain is on the cytoplasmic side; it reads KKKPSCLQRD…WFDQIAVKVA (186 aa). Disordered stretches follow at residues 295–314, 321–378, and 397–463; these read LQRD…DAVG, LTTA…GSHG, and SQCS…PSQA. A compositionally biased stretch (basic and acidic residues) spans 297 to 310; that stretch reads RDAKVPHVPDEKSQ. 2 stretches are compositionally biased toward low complexity: residues 324–338 and 363–378; these read APSS…SASA and ARAS…GSHG. Ser-331 is subject to Phosphoserine. Polar residues predominate over residues 429-442; that stretch reads ECPSQSPCETTETL.

In terms of assembly, binds to TRAF2. Interacts with BMX. Interacts (activated form) with XPNPEP3.

The protein resides in the membrane. In terms of biological role, receptor with high affinity for TNFSF2/TNF-alpha and approximately 5-fold lower affinity for homotrimeric TNFSF1/lymphotoxin-alpha. The TRAF1/TRAF2 complex recruits the apoptotic suppressors BIRC2 and BIRC3 to TNFRSF1B/TNFR2. In Mus musculus (Mouse), this protein is Tumor necrosis factor receptor superfamily member 1B (Tnfrsf1b).